Reading from the N-terminus, the 270-residue chain is Ethanolamine ammonia-lyase small subunit (270 aa).

3 residues coordinate adenosylcob(III)alamin: Val166, Glu187, and Cys216.

The protein belongs to the EutC family. In terms of assembly, the basic unit is a heterodimer which dimerizes to form tetramers. The heterotetramers trimerize; 6 large subunits form a core ring with 6 small subunits projecting outwards. Adenosylcob(III)alamin serves as cofactor.

Its subcellular location is the bacterial microcompartment. It catalyses the reaction ethanolamine = acetaldehyde + NH4(+). It functions in the pathway amine and polyamine degradation; ethanolamine degradation. Functionally, catalyzes the deamination of various vicinal amino-alcohols to oxo compounds. Allows this organism to utilize ethanolamine as the sole source of nitrogen and carbon in the presence of external vitamin B12. The sequence is that of Ethanolamine ammonia-lyase small subunit from Ralstonia nicotianae (strain ATCC BAA-1114 / GMI1000) (Ralstonia solanacearum).